Consider the following 145-residue polypeptide: MFDNLQRKFLNLIGIEIEEEDKPQEVSKTKDENAKPKHETPKVVTIGKANQTEVTVYNLKLFDEVVKVCDALRENKIVVFNLEQVAEEHIQRIIDFVSGAVYVLDAKIHKVSKKIFVVVPRSIDLEVDEQLKEEFRSKGVFAWLK.

The segment covering 23–41 (PQEVSKTKDENAKPKHETP) has biased composition (basic and acidic residues). Residues 23–42 (PQEVSKTKDENAKPKHETPK) form a disordered region.

It belongs to the SepF family. Homodimer. Interacts with FtsZ.

The protein localises to the cytoplasm. Its function is as follows. Cell division protein that is part of the divisome complex and is recruited early to the Z-ring. Probably stimulates Z-ring formation, perhaps through the cross-linking of FtsZ protofilaments. Its function overlaps with FtsA. This is Cell division protein SepF from Caldicellulosiruptor bescii (strain ATCC BAA-1888 / DSM 6725 / KCTC 15123 / Z-1320) (Anaerocellum thermophilum).